The sequence spans 335 residues: Beta-ketoacyl-[acyl-carrier-protein] synthase III (335 aa).

Residues C117 and H258 contribute to the active site. Residues 259–263 form an ACP-binding region; the sequence is QANQR. Residue N288 is part of the active site.

Belongs to the thiolase-like superfamily. FabH family. In terms of assembly, homodimer.

It localises to the cytoplasm. It carries out the reaction malonyl-[ACP] + acetyl-CoA + H(+) = 3-oxobutanoyl-[ACP] + CO2 + CoA. The protein operates within lipid metabolism; fatty acid biosynthesis. Functionally, catalyzes the condensation reaction of fatty acid synthesis by the addition to an acyl acceptor of two carbons from malonyl-ACP. Catalyzes the first condensation reaction which initiates fatty acid synthesis and may therefore play a role in governing the total rate of fatty acid production. Possesses both acetoacetyl-ACP synthase and acetyl transacylase activities. Its substrate specificity determines the biosynthesis of branched-chain and/or straight-chain of fatty acids. This is Beta-ketoacyl-[acyl-carrier-protein] synthase III from Synechococcus elongatus (strain ATCC 33912 / PCC 7942 / FACHB-805) (Anacystis nidulans R2).